The chain runs to 449 residues: MFS-type transporter 1 (449 aa).

Residues 1-37 (MTHSSSNEHEKEDDRRASDDMMDRDDQNAKEEQDVSK) are compositionally biased toward basic and acidic residues. A disordered region spans residues 1 to 43 (MTHSSSNEHEKEDDRRASDDMMDRDDQNAKEEQDVSKDAPPVN). Helical transmembrane passes span 61–81 (VAGG…IGIF), 97–117 (TISW…LVVG), 127–147 (YILL…SLST), 152–172 (ILLS…TPAV), 185–205 (LANG…PIMF), and 212–232 (VGFP…LIIA). The N-linked (GlcNAc...) asparagine glycan is linked to N233. A run of 6 helical transmembrane segments spans residues 262–282 (LLTT…INYI), 298–318 (YLIP…GFVA), 326–346 (VHTF…LPAA), 349–369 (APII…VAIL), 390–410 (FGVL…FVAH), and 420–440 (IWTG…RISL).

This sequence belongs to the major facilitator superfamily. Monocarboxylate porter (TC 2.A.1.13) family.

It localises to the cell membrane. It catalyses the reaction erythrostominone(in) = erythrostominone(out). The catalysed reaction is deoxyerythrostominone(in) = deoxyerythrostominone(out). It carries out the reaction epierythrostominol(in) = epierythrostominol(out). The enzyme catalyses deoxyerythrostominol(in) = deoxyerythrostominol(out). Functionally, MFS-type transporter that mediates the secretion of the 4 major naphthoquinone derivatives produced, erythrostominone (NQ1), deoxyerythrostominone (NQ2), epierythrostominol (NQ4), and deoxyerythrostominol (NQ5), as well as of 3 newly identified naphthoquinone derivatives termed NQ7, NQ8 and NQ9. This Ophiocordyceps sp. (strain BCC 1869) (Entomopathogenic fungus) protein is MFS-type transporter 1.